The chain runs to 451 residues: Glyceraldehyde-3-phosphate dehydrogenase B, chloroplastic (451 aa).

Residues 1–83 (MASHAALAPS…AAPVRGETVA (83 aa)) constitute a chloroplast transit peptide. NADP(+) contacts are provided by residues 94-95 (RI), D118, and R163. Residues 237–239 (SCT), T268, R283, 296–297 (TG), and R319 contribute to the D-glyceraldehyde 3-phosphate site. C238 acts as the Nucleophile in catalysis. N402 contributes to the NADP(+) binding site.

It belongs to the glyceraldehyde-3-phosphate dehydrogenase family. In terms of assembly, tetramer of either four A chains (GAPDH 2) or two A and two B chains (GAPDH 1).

It is found in the plastid. It localises to the chloroplast. It catalyses the reaction D-glyceraldehyde 3-phosphate + phosphate + NADP(+) = (2R)-3-phospho-glyceroyl phosphate + NADPH + H(+). It participates in carbohydrate biosynthesis; Calvin cycle. The sequence is that of Glyceraldehyde-3-phosphate dehydrogenase B, chloroplastic (GAPB) from Spinacia oleracea (Spinach).